A 95-amino-acid chain; its full sequence is MSLSNEQVGRIARLARLAISEGEIDAVRAKLDGIFGLIEQMQAVDTAGVEPMSHPQELATRLRDDVVTETDRRSAFQSVAPQTEAGLYLVPKVIE.

The protein belongs to the GatC family. Heterotrimer of A, B and C subunits.

It carries out the reaction L-glutamyl-tRNA(Gln) + L-glutamine + ATP + H2O = L-glutaminyl-tRNA(Gln) + L-glutamate + ADP + phosphate + H(+). The enzyme catalyses L-aspartyl-tRNA(Asn) + L-glutamine + ATP + H2O = L-asparaginyl-tRNA(Asn) + L-glutamate + ADP + phosphate + 2 H(+). In terms of biological role, allows the formation of correctly charged Asn-tRNA(Asn) or Gln-tRNA(Gln) through the transamidation of misacylated Asp-tRNA(Asn) or Glu-tRNA(Gln) in organisms which lack either or both of asparaginyl-tRNA or glutaminyl-tRNA synthetases. The reaction takes place in the presence of glutamine and ATP through an activated phospho-Asp-tRNA(Asn) or phospho-Glu-tRNA(Gln). The sequence is that of Aspartyl/glutamyl-tRNA(Asn/Gln) amidotransferase subunit C from Azoarcus sp. (strain BH72).